Here is a 496-residue protein sequence, read N- to C-terminus: Lysine--tRNA ligase (496 aa).

Residues glutamate 409 and glutamate 416 each coordinate Mg(2+).

This sequence belongs to the class-II aminoacyl-tRNA synthetase family. In terms of assembly, homodimer. Mg(2+) serves as cofactor.

The protein resides in the cytoplasm. The catalysed reaction is tRNA(Lys) + L-lysine + ATP = L-lysyl-tRNA(Lys) + AMP + diphosphate. The protein is Lysine--tRNA ligase of Streptococcus pneumoniae serotype 4 (strain ATCC BAA-334 / TIGR4).